A 484-amino-acid chain; its full sequence is MTTLMVQGTTSDAGKSTLVTALCRWLLRQGVAVVPFKPQNMALNSAVTADGGEIGRAQAVQAQACRLAPHTDMNPVLLKPNSDTGAQVIIHGRAVTSMNAVAYHDYKAIAMQAVLASHQRLSGEYPVVMVEGAGSPAEINLRAGDIANMGFAEAVDCPVILVADINRGGVFAHLVGTLELLSPTEQARVKGFVINRFRGDIALLQPGLDWLEQRTGKPVLGVLPYVTDLHLEAEDGIDVRQGAKDERVLKVIVPVLPRISNHTDFDPLRLHPQVDLQFIGPGQPIPPADLIILPGSKSVRGDLAQLRERGWDTAIARHLRYGGKLIGICGGLQMLGREVHDPLGLEGPAGSSPGLGLLDYATVLEAQKQLRNVAGALSLEQSPVAGYEIHAGVTQGPALQRPAVQLADGRSDGAISADGQILATYLHGLFEGSQSCAALLRWAGLADVQQIDYEALRERDIERLADLVEKHLDTAHLRKLCGVA.

In terms of domain architecture, GATase cobBQ-type spans 248-435; that stretch reads VLKVIVPVLP…LHGLFEGSQS (188 aa). The active-site Nucleophile is Cys-329. His-427 is an active-site residue.

The protein belongs to the CobB/CobQ family. CobQ subfamily.

It functions in the pathway cofactor biosynthesis; adenosylcobalamin biosynthesis. Its function is as follows. Catalyzes amidations at positions B, D, E, and G on adenosylcobyrinic A,C-diamide. NH(2) groups are provided by glutamine, and one molecule of ATP is hydrogenolyzed for each amidation. This chain is Cobyric acid synthase, found in Pseudomonas putida (strain W619).